The chain runs to 378 residues: Anhydro-N-acetylmuramic acid kinase (378 aa).

Glycine 23–aspartate 30 serves as a coordination point for ATP.

It belongs to the anhydro-N-acetylmuramic acid kinase family.

The catalysed reaction is 1,6-anhydro-N-acetyl-beta-muramate + ATP + H2O = N-acetyl-D-muramate 6-phosphate + ADP + H(+). The protein operates within amino-sugar metabolism; 1,6-anhydro-N-acetylmuramate degradation. Its pathway is cell wall biogenesis; peptidoglycan recycling. In terms of biological role, catalyzes the specific phosphorylation of 1,6-anhydro-N-acetylmuramic acid (anhMurNAc) with the simultaneous cleavage of the 1,6-anhydro ring, generating MurNAc-6-P. Is required for the utilization of anhMurNAc either imported from the medium or derived from its own cell wall murein, and thus plays a role in cell wall recycling. This Bordetella pertussis (strain Tohama I / ATCC BAA-589 / NCTC 13251) protein is Anhydro-N-acetylmuramic acid kinase.